The sequence spans 376 residues: Lipoyl synthase 1, mitochondrial (376 aa).

The [4Fe-4S] cluster site is built by Cys-109, Cys-114, Cys-120, Cys-140, Cys-144, Cys-147, and Ser-356. Residues 125–345 (ETGTATATIM…QTLGMEMGFR (221 aa)) form the Radical SAM core domain.

This sequence belongs to the radical SAM superfamily. Lipoyl synthase family. [4Fe-4S] cluster is required as a cofactor.

It is found in the mitochondrion. The catalysed reaction is [[Fe-S] cluster scaffold protein carrying a second [4Fe-4S](2+) cluster] + N(6)-octanoyl-L-lysyl-[protein] + 2 oxidized [2Fe-2S]-[ferredoxin] + 2 S-adenosyl-L-methionine + 4 H(+) = [[Fe-S] cluster scaffold protein] + N(6)-[(R)-dihydrolipoyl]-L-lysyl-[protein] + 4 Fe(3+) + 2 hydrogen sulfide + 2 5'-deoxyadenosine + 2 L-methionine + 2 reduced [2Fe-2S]-[ferredoxin]. It participates in protein modification; protein lipoylation via endogenous pathway; protein N(6)-(lipoyl)lysine from octanoyl-[acyl-carrier-protein]: step 2/2. Catalyzes the radical-mediated insertion of two sulfur atoms into the C-6 and C-8 positions of the octanoyl moiety bound to the lipoyl domains of lipoate-dependent enzymes, thereby converting the octanoylated domains into lipoylated derivatives. This chain is Lipoyl synthase 1, mitochondrial, found in Pisum sativum (Garden pea).